Here is a 158-residue protein sequence, read N- to C-terminus: NAD(P)H-quinone oxidoreductase subunit J, chloroplastic (158 aa).

This sequence belongs to the complex I 30 kDa subunit family. As to quaternary structure, NDH is composed of at least 16 different subunits, 5 of which are encoded in the nucleus.

It localises to the plastid. It is found in the chloroplast thylakoid membrane. It catalyses the reaction a plastoquinone + NADH + (n+1) H(+)(in) = a plastoquinol + NAD(+) + n H(+)(out). The catalysed reaction is a plastoquinone + NADPH + (n+1) H(+)(in) = a plastoquinol + NADP(+) + n H(+)(out). Its function is as follows. NDH shuttles electrons from NAD(P)H:plastoquinone, via FMN and iron-sulfur (Fe-S) centers, to quinones in the photosynthetic chain and possibly in a chloroplast respiratory chain. The immediate electron acceptor for the enzyme in this species is believed to be plastoquinone. Couples the redox reaction to proton translocation, and thus conserves the redox energy in a proton gradient. This Aethionema grandiflorum (Persian stone-cress) protein is NAD(P)H-quinone oxidoreductase subunit J, chloroplastic.